A 511-amino-acid chain; its full sequence is Early growth response protein 1 (511 aa).

Disordered regions lie at residues 133–169 (ASIP…LSCS) and 291–312 (PSRM…RPYA). The span at 137-169 (SSTSQATHPSSSSTSSIPSSSSSSTSSASLSCS) shows a compositional bias: low complexity. 3 C2H2-type zinc fingers span residues 311–335 (YACP…IRIH), 341–363 (FQCR…IRTH), and 369–391 (FACE…TKIH). The interval 384–406 (RKRHTKIHMRQKDKKAEKGATAA) is disordered. Basic residues predominate over residues 386–396 (RHTKIHMRQKD).

It belongs to the EGR C2H2-type zinc-finger protein family. Detected in muscle and brain.

Its subcellular location is the nucleus. The protein resides in the cytoplasm. In terms of biological role, transcriptional regulator. Recognizes and binds to the DNA sequence 5'-GCG(T/G)GGGCG-3'(EGR-site) in the promoter region of target genes. Binds double-stranded target DNA, irrespective of the cytosine methylation status. Regulates the transcription of numerous target genes, and thereby plays an important role in regulating the response to growth factors, DNA damage, and ischemia. Plays a role in the regulation of cell survival, proliferation and cell death. Mediates responses to ischemia and hypoxia; regulates the expression of proteins that are involved in inflammatory processes. Plays a role in regulating the expression of circadian clock genes. Plays a role in the organization of Muller glia cells in the inner and outer plexiform layers of the retina. This chain is Early growth response protein 1 (egr1), found in Danio rerio (Zebrafish).